A 524-amino-acid polypeptide reads, in one-letter code: B3 domain-containing protein Os07g0183700 (524 aa).

Disordered stretches follow at residues 94–152 (DGEG…TSVS) and 191–232 (PLQP…FQTQ). The segment covering 100-109 (CAPPPSPIPA) has biased composition (pro residues). Composition is skewed to low complexity over residues 110–124 (GPASSTVSAASSAPA) and 200–232 (AAAAAGSPSATTPEPGHGEATPTTSSSAQFQTQ). The TF-B3 DNA-binding region spans 336 to 434 (SFVKPLTYTD…EMFMAVRRTR (99 aa)).

The protein resides in the nucleus. This Oryza sativa subsp. japonica (Rice) protein is B3 domain-containing protein Os07g0183700.